Reading from the N-terminus, the 534-residue chain is (E)-beta-farnesene synthase (534 aa).

D287, D291, N431, S435, and E439 together coordinate Mg(2+). A DDXXD motif motif is present at residues 287–291 (DDMMD).

It belongs to the terpene synthase family. Mg(2+) serves as cofactor. Co(2+) is required as a cofactor. It depends on Mn(2+) as a cofactor.

It is found in the cytoplasm. It carries out the reaction (2E,6E)-farnesyl diphosphate = (E)-beta-farnesene + diphosphate. It participates in secondary metabolite biosynthesis; terpenoid biosynthesis. Its function is as follows. Sesquiterpene cyclase catalyzing the production of beta-farnesene and alpha-bergamotene in equal amounts from farnesyl diphosphate. Involved in indirect defense by producing volatile signals attracting natural enemies of herbivores. In Zea mays subsp. mexicana (Mexican teosinte), this protein is (E)-beta-farnesene synthase.